The following is a 153-amino-acid chain: MTDQIEIFTDGACSGNPGPGGWGAILRSGAHEKEIWGGEPHTTNNRMELLAVIRALELLKRPVVARVHTDSQYVQKGISEWIHGWKARGWKTAAKAPVKNEDLWRALDEAASRHQVQWVWVRGHAGHVENERADELARRGVDAVRRQGAAVAG.

One can recognise an RNase H type-1 domain in the interval 1-142 (MTDQIEIFTD…ADELARRGVD (142 aa)). The Mg(2+) site is built by Asp-10, Glu-48, Asp-70, and Asp-134.

The protein belongs to the RNase H family. Monomer. Mg(2+) is required as a cofactor.

The protein resides in the cytoplasm. It carries out the reaction Endonucleolytic cleavage to 5'-phosphomonoester.. Functionally, endonuclease that specifically degrades the RNA of RNA-DNA hybrids. This is Ribonuclease H from Aromatoleum aromaticum (strain DSM 19018 / LMG 30748 / EbN1) (Azoarcus sp. (strain EbN1)).